We begin with the raw amino-acid sequence, 99 residues long: DNA-directed RNA polymerase subunit omega (99 aa).

This sequence belongs to the RNA polymerase subunit omega family. As to quaternary structure, the RNAP catalytic core consists of 2 alpha, 1 beta, 1 beta' and 1 omega subunit. When a sigma factor is associated with the core the holoenzyme is formed, which can initiate transcription.

It carries out the reaction RNA(n) + a ribonucleoside 5'-triphosphate = RNA(n+1) + diphosphate. Functionally, promotes RNA polymerase assembly. Latches the N- and C-terminal regions of the beta' subunit thereby facilitating its interaction with the beta and alpha subunits. The protein is DNA-directed RNA polymerase subunit omega of Stenotrophomonas maltophilia (strain K279a).